A 218-amino-acid chain; its full sequence is Small ribosomal subunit protein uS3 (218 aa).

In terms of domain architecture, KH type-2 spans 38–106 (IRKFIATKLA…RVHINIVEIK (69 aa)).

It belongs to the universal ribosomal protein uS3 family. Part of the 30S ribosomal subunit. Forms a tight complex with proteins S10 and S14.

Its function is as follows. Binds the lower part of the 30S subunit head. Binds mRNA in the 70S ribosome, positioning it for translation. This chain is Small ribosomal subunit protein uS3, found in Enterococcus faecalis (strain ATCC 700802 / V583).